Reading from the N-terminus, the 381-residue chain is Putative heat shock protein HSP 90-beta 2 (381 aa).

Positions 46, 88, and 107 each coordinate ATP. The span at 145-174 (KEISDGKAEEEKGEKEEENKDDEEKPKIED) shows a compositional bias: basic and acidic residues. The tract at residues 145–192 (KEISDGKAEEEKGEKEEENKDDEEKPKIEDVGSDEEDDSGKDKKKKTK) is disordered. Serine 177 carries the phosphoserine modification. Positions 315–347 (ELPEDGEEKKRMEERKAKFENLCKFMKETLDKK) form a coiled coil.

Belongs to the heat shock protein 90 family. In terms of assembly, homodimer.

It localises to the cytoplasm. In terms of biological role, putative molecular chaperone that may promote the maturation, structural maintenance and proper regulation of specific target proteins. This Homo sapiens (Human) protein is Putative heat shock protein HSP 90-beta 2 (HSP90AB2P).